The sequence spans 262 residues: Acyl-[acyl-carrier-protein]--UDP-N-acetylglucosamine O-acyltransferase (262 aa).

This sequence belongs to the transferase hexapeptide repeat family. LpxA subfamily. As to quaternary structure, homotrimer.

It localises to the cytoplasm. It carries out the reaction a (3R)-hydroxyacyl-[ACP] + UDP-N-acetyl-alpha-D-glucosamine = a UDP-3-O-[(3R)-3-hydroxyacyl]-N-acetyl-alpha-D-glucosamine + holo-[ACP]. Its pathway is glycolipid biosynthesis; lipid IV(A) biosynthesis; lipid IV(A) from (3R)-3-hydroxytetradecanoyl-[acyl-carrier-protein] and UDP-N-acetyl-alpha-D-glucosamine: step 1/6. Involved in the biosynthesis of lipid A, a phosphorylated glycolipid that anchors the lipopolysaccharide to the outer membrane of the cell. The protein is Acyl-[acyl-carrier-protein]--UDP-N-acetylglucosamine O-acyltransferase of Burkholderia thailandensis (strain ATCC 700388 / DSM 13276 / CCUG 48851 / CIP 106301 / E264).